The chain runs to 167 residues: Large ribosomal subunit protein uL23 (167 aa).

A large ribosomal subunit protein uL23 region spans residues 1–118 (MNVNEIIKGP…TEEKAKIAKK (118 aa)). 2 disordered regions span residues 91-112 (FEDE…TEEK) and 136-167 (KQAE…NSAN). Basic and acidic residues-rich tracts occupy residues 97-112 (QDQK…TEEK) and 136-157 (KQAE…RIEN). Residues 119–167 (KAELEAKNKEIAEKLAKKQAELAKKDSETNENQEKRIENQTENQENSAN) are unknown. Positions 158–167 (QTENQENSAN) are enriched in polar residues.

It belongs to the universal ribosomal protein uL23 family. As to quaternary structure, part of the 50S ribosomal subunit. Contacts protein L29, and trigger factor when it is bound to the ribosome.

In terms of biological role, one of the early assembly proteins it binds 23S rRNA. One of the proteins that surrounds the polypeptide exit tunnel on the outside of the ribosome. Forms the main docking site for trigger factor binding to the ribosome. This Mesomycoplasma hyopneumoniae (strain J / ATCC 25934 / NCTC 10110) (Mycoplasma hyopneumoniae) protein is Large ribosomal subunit protein uL23.